A 203-amino-acid polypeptide reads, in one-letter code: Large ribosomal subunit protein bL25 (203 aa).

This sequence belongs to the bacterial ribosomal protein bL25 family. CTC subfamily. In terms of assembly, part of the 50S ribosomal subunit; part of the 5S rRNA/L5/L18/L25 subcomplex. Contacts the 5S rRNA. Binds to the 5S rRNA independently of L5 and L18.

Its function is as follows. This is one of the proteins that binds to the 5S RNA in the ribosome where it forms part of the central protuberance. This Rickettsia prowazekii (strain Madrid E) protein is Large ribosomal subunit protein bL25.